The chain runs to 861 residues: Bifunctional uridylyltransferase/uridylyl-removing enzyme (861 aa).

The uridylyltransferase stretch occupies residues 1–321 (MKNDNRIIKN…VYHQKQKIIR (321 aa)). Residues 322 to 678 (LDDEFQLSNR…IMPHHSQGGT (357 aa)) are uridylyl-removing. The region spanning 440–562 (VDQHTLFVIR…LPHARYLDYL (123 aa)) is the HD domain. ACT domains are found at residues 679-760 (EVFI…AVSR) and 788-861 (QLFL…KSKY).

This sequence belongs to the GlnD family. Mg(2+) is required as a cofactor.

The enzyme catalyses [protein-PII]-L-tyrosine + UTP = [protein-PII]-uridylyl-L-tyrosine + diphosphate. It catalyses the reaction [protein-PII]-uridylyl-L-tyrosine + H2O = [protein-PII]-L-tyrosine + UMP + H(+). Uridylyltransferase (UTase) activity is inhibited by glutamine, while glutamine activates uridylyl-removing (UR) activity. Functionally, modifies, by uridylylation and deuridylylation, the PII regulatory proteins (GlnB and homologs), in response to the nitrogen status of the cell that GlnD senses through the glutamine level. Under low glutamine levels, catalyzes the conversion of the PII proteins and UTP to PII-UMP and PPi, while under higher glutamine levels, GlnD hydrolyzes PII-UMP to PII and UMP (deuridylylation). Thus, controls uridylylation state and activity of the PII proteins, and plays an important role in the regulation of nitrogen assimilation and metabolism. This Legionella pneumophila (strain Corby) protein is Bifunctional uridylyltransferase/uridylyl-removing enzyme.